The chain runs to 384 residues: Acetylornithine aminotransferase (384 aa).

Pyridoxal 5'-phosphate is bound by residues 94–95 (GT) and F121. Residue R124 coordinates N(2)-acetyl-L-ornithine. 206 to 209 (DEVQ) lines the pyridoxal 5'-phosphate pocket. K235 is subject to N6-(pyridoxal phosphate)lysine. S263 contacts N(2)-acetyl-L-ornithine. T264 serves as a coordination point for pyridoxal 5'-phosphate.

This sequence belongs to the class-III pyridoxal-phosphate-dependent aminotransferase family. ArgD subfamily. In terms of assembly, homodimer. Pyridoxal 5'-phosphate is required as a cofactor.

Its subcellular location is the cytoplasm. The enzyme catalyses N(2)-acetyl-L-ornithine + 2-oxoglutarate = N-acetyl-L-glutamate 5-semialdehyde + L-glutamate. Its pathway is amino-acid biosynthesis; L-arginine biosynthesis; N(2)-acetyl-L-ornithine from L-glutamate: step 4/4. This chain is Acetylornithine aminotransferase, found in Listeria innocua serovar 6a (strain ATCC BAA-680 / CLIP 11262).